The following is a 297-amino-acid chain: Bifunctional protein FolD 2 (297 aa).

Residues 177 to 179, I202, and I243 each bind NADP(+); that span reads GKS.

This sequence belongs to the tetrahydrofolate dehydrogenase/cyclohydrolase family. Homodimer.

It carries out the reaction (6R)-5,10-methylene-5,6,7,8-tetrahydrofolate + NADP(+) = (6R)-5,10-methenyltetrahydrofolate + NADPH. The enzyme catalyses (6R)-5,10-methenyltetrahydrofolate + H2O = (6R)-10-formyltetrahydrofolate + H(+). It participates in one-carbon metabolism; tetrahydrofolate interconversion. In terms of biological role, catalyzes the oxidation of 5,10-methylenetetrahydrofolate to 5,10-methenyltetrahydrofolate and then the hydrolysis of 5,10-methenyltetrahydrofolate to 10-formyltetrahydrofolate. This chain is Bifunctional protein FolD 2, found in Rhizorhabdus wittichii (strain DSM 6014 / CCUG 31198 / JCM 15750 / NBRC 105917 / EY 4224 / RW1) (Sphingomonas wittichii).